We begin with the raw amino-acid sequence, 587 residues long: Arginine--tRNA ligase (587 aa).

The 'HIGH' region signature appears at 126 to 136 (ANPTGPLHVGH).

The protein belongs to the class-I aminoacyl-tRNA synthetase family. Monomer.

The protein resides in the cytoplasm. The catalysed reaction is tRNA(Arg) + L-arginine + ATP = L-arginyl-tRNA(Arg) + AMP + diphosphate. This chain is Arginine--tRNA ligase, found in Azoarcus sp. (strain BH72).